We begin with the raw amino-acid sequence, 395 residues long: Chaperone protein DnaJ 2 (395 aa).

The region spanning 10–75 (NYYADLGVSS…KKRKEYDELK (66 aa)) is the J domain. Residues 165–242 (GTTIPVELTG…CHGRGTVRKS (78 aa)) form a CR-type zinc finger. Zn(2+) contacts are provided by Cys178, Cys181, Cys194, Cys197, Cys216, Cys219, Cys230, and Cys233. CXXCXGXG motif repeat units lie at residues 178 to 185 (CNTCHGSG), 194 to 201 (CGTCDGTG), 216 to 223 (CATCGGTG), and 230 to 237 (CDNCHGRG).

It belongs to the DnaJ family. Homodimer. Zn(2+) is required as a cofactor.

Its subcellular location is the cytoplasm. Functionally, participates actively in the response to hyperosmotic and heat shock by preventing the aggregation of stress-denatured proteins and by disaggregating proteins, also in an autonomous, DnaK-independent fashion. Unfolded proteins bind initially to DnaJ; upon interaction with the DnaJ-bound protein, DnaK hydrolyzes its bound ATP, resulting in the formation of a stable complex. GrpE releases ADP from DnaK; ATP binding to DnaK triggers the release of the substrate protein, thus completing the reaction cycle. Several rounds of ATP-dependent interactions between DnaJ, DnaK and GrpE are required for fully efficient folding. Also involved, together with DnaK and GrpE, in the DNA replication of plasmids through activation of initiation proteins. The protein is Chaperone protein DnaJ 2 of Corynebacterium glutamicum (strain ATCC 13032 / DSM 20300 / JCM 1318 / BCRC 11384 / CCUG 27702 / LMG 3730 / NBRC 12168 / NCIMB 10025 / NRRL B-2784 / 534).